Here is a 425-residue protein sequence, read N- to C-terminus: Serine--tRNA ligase (425 aa).

Thr230–Glu232 is an L-serine binding site. Arg261–Glu263 is an ATP binding site. L-serine is bound at residue Glu284. Glu348 to Ser351 is a binding site for ATP. Position 384 (Ser384) interacts with L-serine.

This sequence belongs to the class-II aminoacyl-tRNA synthetase family. Type-1 seryl-tRNA synthetase subfamily. Homodimer. The tRNA molecule binds across the dimer.

The protein resides in the cytoplasm. The catalysed reaction is tRNA(Ser) + L-serine + ATP = L-seryl-tRNA(Ser) + AMP + diphosphate + H(+). It catalyses the reaction tRNA(Sec) + L-serine + ATP = L-seryl-tRNA(Sec) + AMP + diphosphate + H(+). It functions in the pathway aminoacyl-tRNA biosynthesis; selenocysteinyl-tRNA(Sec) biosynthesis; L-seryl-tRNA(Sec) from L-serine and tRNA(Sec): step 1/1. Its function is as follows. Catalyzes the attachment of serine to tRNA(Ser). Is also able to aminoacylate tRNA(Sec) with serine, to form the misacylated tRNA L-seryl-tRNA(Sec), which will be further converted into selenocysteinyl-tRNA(Sec). This chain is Serine--tRNA ligase, found in Streptococcus equi subsp. zooepidemicus (strain MGCS10565).